Consider the following 243-residue polypeptide: MLLIPAIDLKDGKCVRLRQGRMEDDTVFSDDPVAVAGRWVAAGARRLHLVDLDGAFAGKPRNAETIHAIREACPDVEIQVGGGIRDEETIQGYLNAGVDFVIIGTKAVSAPHFVSDVTAEFPNHIIIGLDARDGKVAIDGWSKLSHHDVIDLAQKFEADGVEAIIYTDISRDGMMGGVNIEATSRLARAIHIPVIASGGITTIDDIKALGEIVGDGVIGAITGRAIYEGTLDFAEGLKLAETF.

Asp-8 (proton acceptor) is an active-site residue. Asp-130 acts as the Proton donor in catalysis.

This sequence belongs to the HisA/HisF family.

It is found in the cytoplasm. It carries out the reaction 1-(5-phospho-beta-D-ribosyl)-5-[(5-phospho-beta-D-ribosylamino)methylideneamino]imidazole-4-carboxamide = 5-[(5-phospho-1-deoxy-D-ribulos-1-ylimino)methylamino]-1-(5-phospho-beta-D-ribosyl)imidazole-4-carboxamide. It functions in the pathway amino-acid biosynthesis; L-histidine biosynthesis; L-histidine from 5-phospho-alpha-D-ribose 1-diphosphate: step 4/9. This chain is 1-(5-phosphoribosyl)-5-[(5-phosphoribosylamino)methylideneamino] imidazole-4-carboxamide isomerase, found in Methylococcus capsulatus (strain ATCC 33009 / NCIMB 11132 / Bath).